Reading from the N-terminus, the 527-residue chain is Glucose-6-phosphate isomerase (527 aa).

The active-site Proton donor is the Glu323. Catalysis depends on residues His352 and Lys454.

Belongs to the GPI family.

Its subcellular location is the cytoplasm. It carries out the reaction alpha-D-glucose 6-phosphate = beta-D-fructose 6-phosphate. It participates in carbohydrate biosynthesis; gluconeogenesis. It functions in the pathway carbohydrate degradation; glycolysis; D-glyceraldehyde 3-phosphate and glycerone phosphate from D-glucose: step 2/4. In terms of biological role, catalyzes the reversible isomerization of glucose-6-phosphate to fructose-6-phosphate. In Prochlorococcus marinus (strain MIT 9312), this protein is Glucose-6-phosphate isomerase.